A 421-amino-acid chain; its full sequence is POU domain, class 4, transcription factor 1 (421 aa).

The POU-IV box motif lies at 57–66 (RAEALAAVDI). Disordered regions lie at residues 94–117 (STVP…GDLL) and 133–200 (GAGA…GLGH). Over residues 99–108 (AHHHHHHHHH) the composition is skewed to basic residues. Gly residues predominate over residues 133–186 (GAGAAGGGGGAHDGPGGGGGPGGGGGPGGGGPGGGGGGGGPGGGGGGPGGGLLG). Residues 262–339 (DSDTDPRELE…ILQAWLEEAE (78 aa)) enclose the POU-specific domain. Positions 357-416 (KKRKRTSIAAPEKRSLEAYFAVQPRPSSEKIAAIAEKLDLKKNVVRVWFCNQRQKQKRMK) form a DNA-binding region, homeobox.

This sequence belongs to the POU transcription factor family. Class-4 subfamily. In terms of assembly, interacts (via N-terminus) with RIT2; the interaction controls POU4F1 transactivation activity on some neuronal target genes. Isoform 1 interacts with POU4F2 isoform 2; this interaction inhibits both POU4F1 DNA-binding and transcriptional activities. Isoform 1 interacts (C-terminus) with ESR1 (via DNA-binding domain); this interaction decreases the estrogen receptor ESR1 transcriptional activity in a DNA- and ligand 17-beta-estradiol-independent manner. As to expression, expressed in mature osteoclasts (at protein level). Brain, peripheral sensory nervous system and retina. In the adult nervous system, predominates in the medial habenula, superficial gray of the superior colliculus, red nucleus, mesencephalic nucleus of the trigeminal ganglion, nucleus ambiguus, inferior olivary nucleus, and peripheral sensory ganglia.

Its subcellular location is the nucleus. The protein resides in the cytoplasm. In terms of biological role, multifunctional transcription factor with different regions mediating its different effects. Acts by binding (via its C-terminal domain) to sequences related to the consensus octamer motif 5'-ATGCAAAT-3' in the regulatory regions of its target genes. Regulates the expression of specific genes involved in differentiation and survival within a subset of neuronal lineages. It has been shown that activation of some of these genes requires its N-terminal domain, maybe through a neuronal-specific cofactor. Activates BCL2 expression and protects neuronal cells from apoptosis (via the N-terminal domain). Induces neuronal process outgrowth and the coordinate expression of genes encoding synaptic proteins. Exerts its major developmental effects in somatosensory neurons and in brainstem nuclei involved in motor control. Stimulates the binding affinity of the nuclear estrogene receptor ESR1 to DNA estrogen response element (ERE), and hence modulates ESR1-induced transcriptional activity. May positively regulate POU4F2 and POU4F3. Regulates dorsal root ganglion sensory neuron specification and axonal projection into the spinal cord. Plays a role in TNFSF11-mediated terminal osteoclast differentiation. Negatively regulates its own expression interacting directly with a highly conserved autoregulatory domain surrounding the transcription initiation site. Functionally, able to act as transcription factor, cannot regulate the expression of the same subset of genes than isoform 1. Does not have antiapoptotic effect on neuronal cells. This chain is POU domain, class 4, transcription factor 1 (Pou4f1), found in Mus musculus (Mouse).